The chain runs to 130 residues: MSMQDPIADMLTRIRNGQAANKVAISMPSSKLKVAIANVLAAEGYIESVKVLEGAKPELEITLKYFQGKPVVESIQRVSRPGLRIYKRKDELPKVMGGLGVAVVSTSKGVMTDRAARQAGLGGEIICYVA.

The protein belongs to the universal ribosomal protein uS8 family. In terms of assembly, part of the 30S ribosomal subunit. Contacts proteins S5 and S12.

One of the primary rRNA binding proteins, it binds directly to 16S rRNA central domain where it helps coordinate assembly of the platform of the 30S subunit. In Actinobacillus succinogenes (strain ATCC 55618 / DSM 22257 / CCUG 43843 / 130Z), this protein is Small ribosomal subunit protein uS8.